A 760-amino-acid polypeptide reads, in one-letter code: Transferrin receptor protein 1 (760 aa).

Residues 1-65 (MMDQARSAFS…VTKPKRCGGS (65 aa)) are Cytoplasmic-facing. Residues 1–67 (MMDQARSAFS…KPKRCGGSIC (67 aa)) form a mediates interaction with SH3BP4 region. Residues Ser-10 and Ser-19 each carry the phosphoserine modification. The residue at position 20 (Tyr-20) is a Phosphotyrosine. Residues 20–23 (YTRF) carry the Endocytosis signal motif. At Thr-21 the chain carries Phosphothreonine. Ser-24 bears the Phosphoserine mark. A Stop-transfer sequence motif is present at residues 58–61 (KPKR). 2 S-palmitoyl cysteine lipidation sites follow: Cys-62 and Cys-67. A helical; Signal-anchor for type II membrane protein membrane pass occupies residues 66-86 (ICYGTIAVIIFFLIGFMIGYL). The Extracellular portion of the chain corresponds to 87–760 (GYCKGVEPKT…GDVWDIDNEF (674 aa)). In terms of domain architecture, PA spans 223–313 (SKAATVTGKL…GTGDPYTPGF (91 aa)). Residues Asn-251 and Asn-317 are each glycosylated (N-linked (GlcNAc...) asparagine). The interval 569-760 (TMDTYKELTE…GDVWDIDNEF (192 aa)) is ligand-binding. The Cell attachment site signature appears at 646–648 (RGD). 2 N-linked (GlcNAc...) asparagine glycosylation sites follow: Asn-722 and Asn-727.

The protein belongs to the peptidase M28 family. M28B subfamily. In terms of assembly, homodimer; disulfide-linked. Binds one transferrin or HFE molecule per subunit. Interacts with SH3BP4. Interacts with STEAP3; facilitates TFRC endocytosis in erythroid precursor cells. Stearoylated by ZDHHC6 which inhibits TFRC-mediated activation of the JNK pathway and promotes mitochondrial fragmentation. Stearoylation does not affect iron uptake.

The protein localises to the cell membrane. The protein resides in the melanosome. Cellular uptake of iron occurs via receptor-mediated endocytosis of ligand-occupied transferrin receptor into specialized endosomes. Endosomal acidification leads to iron release. The apotransferrin-receptor complex is then recycled to the cell surface with a return to neutral pH and the concomitant loss of affinity of apotransferrin for its receptor. Transferrin receptor is necessary for development of erythrocytes and the nervous system. Positively regulates T and B cell proliferation through iron uptake. Acts as a lipid sensor that regulates mitochondrial fusion by regulating activation of the JNK pathway. When dietary levels of stearate (C18:0) are low, promotes activation of the JNK pathway, resulting in HUWE1-mediated ubiquitination and subsequent degradation of the mitofusin MFN2 and inhibition of mitochondrial fusion. When dietary levels of stearate (C18:0) are high, TFRC stearoylation inhibits activation of the JNK pathway and thus degradation of the mitofusin MFN2. Mediates uptake of NICOL1 into fibroblasts where it may regulate extracellular matrix production. The protein is Transferrin receptor protein 1 (TFRC) of Pongo abelii (Sumatran orangutan).